A 131-amino-acid chain; its full sequence is MIHGIGTDLLDARRIRAGLARYGEHYADRILAPAEHTRYYASRDPAGFLAKCFAAKEAFAKALGTGLRAPVTLRNIAVMRDAHGKPHIDCAPELTAFLRERGVTAQHVSLSDEGDFVLAFVVLEQSATQED.

Residues aspartate 8 and glutamate 57 each contribute to the Mg(2+) site.

It belongs to the P-Pant transferase superfamily. AcpS family. The cofactor is Mg(2+).

The protein localises to the cytoplasm. The catalysed reaction is apo-[ACP] + CoA = holo-[ACP] + adenosine 3',5'-bisphosphate + H(+). In terms of biological role, transfers the 4'-phosphopantetheine moiety from coenzyme A to a Ser of acyl-carrier-protein. This is Holo-[acyl-carrier-protein] synthase from Thiobacillus denitrificans (strain ATCC 25259 / T1).